Reading from the N-terminus, the 88-residue chain is Small ribosomal subunit protein bS16c (88 aa).

The protein belongs to the bacterial ribosomal protein bS16 family.

Its subcellular location is the plastid. It localises to the chloroplast. This chain is Small ribosomal subunit protein bS16c, found in Solanum bulbocastanum (Wild potato).